A 688-amino-acid chain; its full sequence is Putative proline--tRNA ligase YHR020W (688 aa).

S149 bears the Phosphoserine mark. T170 carries the phosphothreonine modification. The disordered stretch occupies residues 631 to 650; that stretch reads ESSAKKDDGEEFEEDDKAPS. S655 carries the post-translational modification Phosphoserine.

It belongs to the class-II aminoacyl-tRNA synthetase family.

The catalysed reaction is tRNA(Pro) + L-proline + ATP = L-prolyl-tRNA(Pro) + AMP + diphosphate. The sequence is that of Putative proline--tRNA ligase YHR020W from Saccharomyces cerevisiae (strain ATCC 204508 / S288c) (Baker's yeast).